A 439-amino-acid chain; its full sequence is D-erythronate kinase (439 aa).

Residues S253, 366–369, and G412 each bind ATP; that span reads GGDV.

This sequence belongs to the four-carbon acid sugar kinase family.

It catalyses the reaction D-erythronate + ATP = 4-phospho-D-erythronate + ADP + H(+). Its function is as follows. Catalyzes the ATP-dependent phosphorylation of D-erythronate to D-erythronate 4-phosphate. Can also phosphorylate D-threonate and 4-hydroxy-L-threonine, with lower efficiency. This Heliobacterium modesticaldum (strain ATCC 51547 / Ice1) protein is D-erythronate kinase.